Reading from the N-terminus, the 115-residue chain is Small ribosomal subunit protein bS6 (115 aa).

The protein belongs to the bacterial ribosomal protein bS6 family.

Binds together with bS18 to 16S ribosomal RNA. The polypeptide is Small ribosomal subunit protein bS6 (Syntrophotalea carbinolica (strain DSM 2380 / NBRC 103641 / GraBd1) (Pelobacter carbinolicus)).